Consider the following 116-residue polypeptide: Non-specific lipid-transfer protein 1 (116 aa).

A signal peptide spans 1–25 (MARAQLVLVALVAALLLAAPHAAVA). 4 disulfide bridges follow: Cys-28/Cys-75, Cys-38/Cys-52, Cys-53/Cys-98, and Cys-73/Cys-112.

It belongs to the plant LTP family. Aleurone (external part) of the seeds.

Functionally, plant non-specific lipid-transfer proteins transfer phospholipids as well as galactolipids across membranes. May play a role in wax or cutin deposition in the cell walls of expanding epidermal cells and certain secretory tissues. The chain is Non-specific lipid-transfer protein 1 (LTP) from Oryza sativa subsp. indica (Rice).